The sequence spans 590 residues: Nuclear receptor subfamily 2 group C member 1 (590 aa).

The tract at residues 1–166 (MATIEEIAHQ…RLQRCIAFGM (166 aa)) is required for interaction with KAT2B. The nuclear receptor DNA-binding region spans 98–173 (FDLCVVCGDK…FGMKQDSVQC (76 aa)). 2 consecutive NR C4-type zinc fingers follow at residues 101 to 121 (CVVC…CEGC) and 137 to 156 (CRGS…CQYC). 2 positions are modified to phosphoserine: Ser185 and Ser203. Residue Thr208 is modified to Phosphothreonine. The residue at position 210 (Thr210) is a Phosphothreonine; by MAPK1. Residue Lys238 forms a Glycyl lysine isopeptide (Lys-Gly) (interchain with G-Cter in SUMO); alternate linkage. Lys238 participates in a covalent cross-link: Glycyl lysine isopeptide (Lys-Gly) (interchain with G-Cter in SUMO2); alternate. The 245-residue stretch at 333–577 (ESMEGSTHLI…SVIPHILKME (245 aa)) folds into the NR LBD domain. Position 568 is a phosphoserine; by PKC (Ser568). The required for interaction with NRIP1 stretch occupies residues 571 to 590 (PHILKMEPADYNSQIIGHSL). A Glycyl lysine isopeptide (Lys-Gly) (interchain with G-Cter in SUMO2) cross-link involves residue Lys575.

It belongs to the nuclear hormone receptor family. NR2 subfamily. Homodimer. Heterodimer; with NR2C2 which is required for chromatin remodeling and for binding to promoter regions such as globin DR1 repeats. Interacts with ESR1; the interaction prevents homodimerization of ESR1 and suppresses its transcriptional activity and cell growth. Interacts with NRIP1 (via its LXXLL motifs); the interaction provides corepressor activity. Interacts with HDAC3 (via the DNA-binding domain); the interaction recruits phosphorylated NR2C1 to PML bodies for sumoylation. Interacts with HDAC4 (via the DNA-binding domain). Interacts with PIAS1; the interaction is required for sumoylation of NR2C1. Interacts with UBE2I; the interaction is required for sumoylation of NR2C1. Interacts with KAT2B; the interaction acts as a corepressor of gene expression. In terms of processing, sumoylation requires both PIAS1 and UBE2I. Sumoylation appears to dissociate NR2C1 from the PML nuclear bodies. Enhances the interaction with NRIP1 but inhibits interaction with KAT2B. In proliferating cells, stimulation by all-trans retinoic acid, activation of MAPK1-mediated phosphorylation and recruitment to PML bodies with subsequent sumoylation, suppresses OCT4 expression. Phosphorylated on several serine and threonine residues. Phosphorylation on Thr-210, stimulated by all-trans retinoic acid (atRA) mediates PML location and sumoylation in proliferating cells which then modulates its association with effector molecules, KAT2B and NRIP1. Phosphorylation on Ser-568 by PKC is important for protein stability and function as activator of RARB.

Its subcellular location is the nucleus. It is found in the PML body. Its function is as follows. Orphan nuclear receptor. Binds the IR7 element in the promoter of its own gene in an autoregulatory negative feedback mechanism. Primarily repressor of a broad range of genes including ESR1 and RARB. Together with NR2C2, forms the core of the DRED (direct repeat erythroid-definitive) complex that represses embryonic and fetal globin transcription. Binds to hormone response elements (HREs) consisting of two 5'-AGGTCA-3' half site direct repeat consensus sequences. Also activator of OCT4 gene expression. Plays a fundamental role in early embryogenesis and regulates embryonic stem cell proliferation and differentiation. Mediator of retinoic acid-regulated preadipocyte proliferation. The sequence is that of Nuclear receptor subfamily 2 group C member 1 (Nr2c1) from Rattus norvegicus (Rat).